Here is a 184-residue protein sequence, read N- to C-terminus: ATP synthase subunit b, chloroplastic (184 aa).

The helical transmembrane segment at 27–49 (LATNPINLSVVFGVLIFFGKGVL) threads the bilayer.

Belongs to the ATPase B chain family. In terms of assembly, F-type ATPases have 2 components, F(1) - the catalytic core - and F(0) - the membrane proton channel. F(1) has five subunits: alpha(3), beta(3), gamma(1), delta(1), epsilon(1). F(0) has four main subunits: a(1), b(1), b'(1) and c(10-14). The alpha and beta chains form an alternating ring which encloses part of the gamma chain. F(1) is attached to F(0) by a central stalk formed by the gamma and epsilon chains, while a peripheral stalk is formed by the delta, b and b' chains.

It localises to the plastid. The protein localises to the chloroplast thylakoid membrane. F(1)F(0) ATP synthase produces ATP from ADP in the presence of a proton or sodium gradient. F-type ATPases consist of two structural domains, F(1) containing the extramembraneous catalytic core and F(0) containing the membrane proton channel, linked together by a central stalk and a peripheral stalk. During catalysis, ATP synthesis in the catalytic domain of F(1) is coupled via a rotary mechanism of the central stalk subunits to proton translocation. Its function is as follows. Component of the F(0) channel, it forms part of the peripheral stalk, linking F(1) to F(0). The polypeptide is ATP synthase subunit b, chloroplastic (Arabis hirsuta (Hairy rock-cress)).